Reading from the N-terminus, the 560-residue chain is Dihydroxy-acid dehydratase (560 aa).

A Mg(2+)-binding site is contributed by Asp-80. Cys-121 contacts [2Fe-2S] cluster. Mg(2+) contacts are provided by Asp-122 and Lys-123. N6-carboxylysine is present on Lys-123. Cys-194 is a [2Fe-2S] cluster binding site. Residue Glu-447 coordinates Mg(2+). Ser-473 (proton acceptor) is an active-site residue.

This sequence belongs to the IlvD/Edd family. Homodimer. [2Fe-2S] cluster is required as a cofactor. It depends on Mg(2+) as a cofactor.

It catalyses the reaction (2R)-2,3-dihydroxy-3-methylbutanoate = 3-methyl-2-oxobutanoate + H2O. It carries out the reaction (2R,3R)-2,3-dihydroxy-3-methylpentanoate = (S)-3-methyl-2-oxopentanoate + H2O. Its pathway is amino-acid biosynthesis; L-isoleucine biosynthesis; L-isoleucine from 2-oxobutanoate: step 3/4. It participates in amino-acid biosynthesis; L-valine biosynthesis; L-valine from pyruvate: step 3/4. In terms of biological role, functions in the biosynthesis of branched-chain amino acids. Catalyzes the dehydration of (2R,3R)-2,3-dihydroxy-3-methylpentanoate (2,3-dihydroxy-3-methylvalerate) into 2-oxo-3-methylpentanoate (2-oxo-3-methylvalerate) and of (2R)-2,3-dihydroxy-3-methylbutanoate (2,3-dihydroxyisovalerate) into 2-oxo-3-methylbutanoate (2-oxoisovalerate), the penultimate precursor to L-isoleucine and L-valine, respectively. This is Dihydroxy-acid dehydratase from Chlorobaculum parvum (strain DSM 263 / NCIMB 8327) (Chlorobium vibrioforme subsp. thiosulfatophilum).